The chain runs to 81 residues: Cytochrome c oxidase subunit 7B2, mitochondrial (81 aa).

Residues 1 to 25 (MMFPLARNALSSLKIRSILQSMARQ) constitute a mitochondrion transit peptide. The Mitochondrial matrix segment spans residues 26–33 (SHVKHSPD). Residues 34 to 60 (FHDKYGNAVLASGTAFCVVAWVFTATQ) form a helical membrane-spanning segment. Over 61 to 81 (IGIEWNLSPVGRVTPKEWKHQ) the chain is Mitochondrial intermembrane.

The protein belongs to the cytochrome c oxidase VIIb family. In terms of assembly, component of the cytochrome c oxidase (complex IV, CIV), a multisubunit enzyme composed of 14 subunits. The complex is composed of a catalytic core of 3 subunits MT-CO1, MT-CO2 and MT-CO3, encoded in the mitochondrial DNA, and 11 supernumerary subunits COX4I, COX5A, COX5B, COX6A, COX6B, COX6C, COX7A, COX7B, COX7C, COX8 and NDUFA4, which are encoded in the nuclear genome. The complex exists as a monomer or a dimer and forms supercomplexes (SCs) in the inner mitochondrial membrane with NADH-ubiquinone oxidoreductase (complex I, CI) and ubiquinol-cytochrome c oxidoreductase (cytochrome b-c1 complex, complex III, CIII), resulting in different assemblies (supercomplex SCI(1)III(2)IV(1) and megacomplex MCI(2)III(2)IV(2)).

It is found in the mitochondrion inner membrane. It functions in the pathway energy metabolism; oxidative phosphorylation. Functionally, component of the cytochrome c oxidase, the last enzyme in the mitochondrial electron transport chain which drives oxidative phosphorylation. The respiratory chain contains 3 multisubunit complexes succinate dehydrogenase (complex II, CII), ubiquinol-cytochrome c oxidoreductase (cytochrome b-c1 complex, complex III, CIII) and cytochrome c oxidase (complex IV, CIV), that cooperate to transfer electrons derived from NADH and succinate to molecular oxygen, creating an electrochemical gradient over the inner membrane that drives transmembrane transport and the ATP synthase. Cytochrome c oxidase is the component of the respiratory chain that catalyzes the reduction of oxygen to water. Electrons originating from reduced cytochrome c in the intermembrane space (IMS) are transferred via the dinuclear copper A center (CU(A)) of subunit 2 and heme A of subunit 1 to the active site in subunit 1, a binuclear center (BNC) formed by heme A3 and copper B (CU(B)). The BNC reduces molecular oxygen to 2 water molecules using 4 electrons from cytochrome c in the IMS and 4 protons from the mitochondrial matrix. This chain is Cytochrome c oxidase subunit 7B2, mitochondrial (COX7B2), found in Macaca fascicularis (Crab-eating macaque).